A 66-amino-acid polypeptide reads, in one-letter code: Ocellatin-PT2 (66 aa).

Residues methionine 1 to cysteine 22 form the signal peptide. The propeptide occupies aspartate 23 to glutamate 39. At valine 66 the chain carries Valine amide.

In terms of tissue distribution, expressed by the skin glands.

The protein resides in the secreted. Functionally, has no antibacterial activity against Gram-negative bacteria E.coli ATCC 25922, S.pneumoniae ATCC 700603 and S.choleraesuis ATCC 14028 or against Gram-positive bacterium S.aureus ATCC 29313. Shows no hemolytic activity and no cytotoxicity. This is Ocellatin-PT2 from Leptodactylus pustulatus (Ceara white-lipped frog).